Here is a 239-residue protein sequence, read N- to C-terminus: Claudin-14 (239 aa).

Over 1 to 7 (MASTAVQ) the chain is Cytoplasmic. The helical transmembrane segment at 8–28 (LLGFLLSFLGMVGTLITTILP) threads the bilayer. Residues 29–81 (HWRRTAHVGTNILTAVSYLKGLWMECVWHSTGIYQCQIYRSLLALPRDLQAAR) lie on the Extracellular side of the membrane. A helical transmembrane segment spans residues 82-102 (ALMVISCLLSGMACACAVVGM). Topologically, residues 103-115 (KCTRCAKGTPAKT) are cytoplasmic. The helical transmembrane segment at 116–136 (TFAVLGGALFLLAGLLCMVAV) threads the bilayer. At 137 to 162 (SWTTNDVVQNFYNPLLPSGMKFEIGQ) the chain is on the extracellular side. The helical transmembrane segment at 163 to 183 (ALYLGFISSSLSLIGGTLLCL) threads the bilayer. Residues 184 to 239 (SCQDEAPYRPYPPQSRAGATTTATAPAYRPPAAYKDNRAPSVTSAAHSGYRLNDYV) lie on the Cytoplasmic side of the membrane.

The protein belongs to the claudin family. Expressed in all sensory epithelia of the inner ear vestibular organs, as well as in liver and kidney.

The protein localises to the cell junction. Its subcellular location is the tight junction. The protein resides in the cell membrane. Its function is as follows. Plays a major role in tight junction-specific obliteration of the intercellular space, through calcium-independent cell-adhesion activity. The sequence is that of Claudin-14 (Cldn14) from Mus musculus (Mouse).